The primary structure comprises 276 residues: Dermonecrotic toxin LlSicTox-alphaIV1ii (276 aa).

The active site involves histidine 5. Glutamate 25 and aspartate 27 together coordinate Mg(2+). The active-site Nucleophile is histidine 41. Intrachain disulfides connect cysteine 45–cysteine 51 and cysteine 47–cysteine 193. A Mg(2+)-binding site is contributed by aspartate 85.

It belongs to the arthropod phospholipase D family. Class II subfamily. The cofactor is Mg(2+). Expressed by the venom gland.

It localises to the secreted. The catalysed reaction is an N-(acyl)-sphingosylphosphocholine = an N-(acyl)-sphingosyl-1,3-cyclic phosphate + choline. It catalyses the reaction an N-(acyl)-sphingosylphosphoethanolamine = an N-(acyl)-sphingosyl-1,3-cyclic phosphate + ethanolamine. The enzyme catalyses a 1-acyl-sn-glycero-3-phosphocholine = a 1-acyl-sn-glycero-2,3-cyclic phosphate + choline. It carries out the reaction a 1-acyl-sn-glycero-3-phosphoethanolamine = a 1-acyl-sn-glycero-2,3-cyclic phosphate + ethanolamine. Functionally, dermonecrotic toxins cleave the phosphodiester linkage between the phosphate and headgroup of certain phospholipids (sphingolipid and lysolipid substrates), forming an alcohol (often choline) and a cyclic phosphate. This toxin acts on sphingomyelin (SM). It may also act on ceramide phosphoethanolamine (CPE), lysophosphatidylcholine (LPC) and lysophosphatidylethanolamine (LPE), but not on lysophosphatidylserine (LPS), and lysophosphatidylglycerol (LPG). It acts by transphosphatidylation, releasing exclusively cyclic phosphate products as second products. Induces dermonecrosis, hemolysis, increased vascular permeability, edema, inflammatory response, and platelet aggregation. This Loxosceles laeta (South American recluse spider) protein is Dermonecrotic toxin LlSicTox-alphaIV1ii.